The chain runs to 155 residues: Small ribosomal subunit protein bS6 (155 aa).

A compositionally biased stretch (basic and acidic residues) spans 115–137 (EADAAKAEADAARVEAEAKKAET). The disordered stretch occupies residues 115–155 (EADAAKAEADAARVEAEAKKAETDETDETVDAETPENEEEN). The span at 138-155 (DETDETVDAETPENEEEN) shows a compositional bias: acidic residues.

The protein belongs to the bacterial ribosomal protein bS6 family.

Binds together with bS18 to 16S ribosomal RNA. The sequence is that of Small ribosomal subunit protein bS6 from Desulforapulum autotrophicum (strain ATCC 43914 / DSM 3382 / VKM B-1955 / HRM2) (Desulfobacterium autotrophicum).